A 92-amino-acid chain; its full sequence is Alpha-conotoxin-like Mi20.1 (92 aa).

Positions 1 to 24 (MPKLEMMLLVLLILPLSSFSAAGE) are cleaved as a signal peptide. Positions 25–45 (QVVQGDRRSDGLARYLQRGGR) are excised as a propeptide. Glu49 bears the 4-carboxyglutamate mark. Pro55 is modified (4-hydroxyproline). Cystine bridges form between Cys63–Cys72, Cys68–Cys80, Cys73–Cys90, and Cys78–Cys92.

It belongs to the conotoxin D superfamily. In terms of assembly, hetero-, homo- or pseudo-homodimer (identical sequence, different post-translational modifications). One pseudo-homodimer of [carboxyGlu-49, hydroxyPro-55]Ml20.1 and [carboxyGlu-49, hydroxyPro-55, hydroxyPro-70]Ml20.1 may exist. As to expression, expressed by the venom duct.

It localises to the secreted. Alpha-conotoxins act on postsynaptic membranes, they bind to the nicotinic acetylcholine receptors (nAChR) and thus inhibit them. Through its two C-terminal domains, this homodimeric protein would bind to two nAChR allosteric sites, located outside the nAChR C-loop of the principal binding face and at the adjacent binding interface in a clockwise direction. This toxin specifically blocks mammalian neuronal nAChR of the alpha-7/CHRNA7, alpha-3-beta-2/CHRNA3-CHRNB2 and alpha-4-beta-2/CHRNA4-CHRNB2 subtypes. In Conus miles (Soldier cone), this protein is Alpha-conotoxin-like Mi20.1.